The primary structure comprises 343 residues: MVELEIVWLVRGAWITVWIVSILPLVIASIPTSKLNSFRELVLSFAGRGKILHPSSQKFTIPQKCFAHFYVIGVVWTTLLLAATWMYACKMAPLSSEEFQLSDIASRLAGGSDVFSVHKSNMTPVEHRFKVWRAVFLLLLMEIHVLRRLIESFYVFKYSPSARMHILGYFAGLFFYVTAPLSLCSNIAPEVAGFVGNQVAEFIANGKSHTSAPEFNLLSSISPLMKLGSLQWIGGAIFLWGWIHQRRCHAILGSLRENPSQAKEYIIPYGDWFGMVSSPHFLAEIVLYAGLLIASGGTDITIWLLFGFVAANLTYAAGETHRWYLRKFENYPANRHAIFPYVY.

Transmembrane regions (helical) follow at residues 12–32, 66–86, 164–184, 223–243, 266–286, and 291–311; these read GAWI…SIPT, FAHF…ATWM, MHIL…LSLC, PLMK…WGWI, IIPY…AEIV, and LLIA…FVAA.

The protein belongs to the steroid 5-alpha reductase family. Polyprenal reductase subfamily. In terms of tissue distribution, expressed in roots, leaves, stems and flowers.

It localises to the endoplasmic reticulum membrane. It carries out the reaction a di-trans,poly-cis-dolichal + NADP(+) = a di-trans,poly-cis-polyprenal + NADPH + H(+). Its pathway is protein modification; protein glycosylation. In terms of biological role, plays a key role in early steps of protein N-linked glycosylation by being involved in the conversion of polyprenol into dolichol. Acts as a polyprenal reductase that mediates the reduction of polyprenal into dolichal in a NADP-dependent mechanism. Dolichols are required for the synthesis of dolichol-linked monosaccharides and the oligosaccharide precursor used for N-glycosylation. Involved in the regulation of plant growth and reproductive processes. The chain is Polyprenal reductase 2 from Arabidopsis thaliana (Mouse-ear cress).